A 427-amino-acid polypeptide reads, in one-letter code: Serine--tRNA ligase (427 aa).

230–232 (TSE) is an L-serine binding site. Position 261 to 263 (261 to 263 (RSE)) interacts with ATP. Glutamate 284 contacts L-serine. An ATP-binding site is contributed by 348 to 351 (EISS). L-serine is bound at residue serine 384.

It belongs to the class-II aminoacyl-tRNA synthetase family. Type-1 seryl-tRNA synthetase subfamily. As to quaternary structure, homodimer. The tRNA molecule binds across the dimer.

The protein resides in the cytoplasm. It carries out the reaction tRNA(Ser) + L-serine + ATP = L-seryl-tRNA(Ser) + AMP + diphosphate + H(+). The enzyme catalyses tRNA(Sec) + L-serine + ATP = L-seryl-tRNA(Sec) + AMP + diphosphate + H(+). Its pathway is aminoacyl-tRNA biosynthesis; selenocysteinyl-tRNA(Sec) biosynthesis; L-seryl-tRNA(Sec) from L-serine and tRNA(Sec): step 1/1. In terms of biological role, catalyzes the attachment of serine to tRNA(Ser). Is also able to aminoacylate tRNA(Sec) with serine, to form the misacylated tRNA L-seryl-tRNA(Sec), which will be further converted into selenocysteinyl-tRNA(Sec). The protein is Serine--tRNA ligase of Desulforapulum autotrophicum (strain ATCC 43914 / DSM 3382 / VKM B-1955 / HRM2) (Desulfobacterium autotrophicum).